The sequence spans 161 residues: Nucleotide-binding protein BamMC406_2474 (161 aa).

It belongs to the YajQ family.

Its function is as follows. Nucleotide-binding protein. In Burkholderia ambifaria (strain MC40-6), this protein is Nucleotide-binding protein BamMC406_2474.